A 931-amino-acid polypeptide reads, in one-letter code: Dipeptidyl aminopeptidase A (931 aa).

Positions 1 to 13 are enriched in basic residues; that stretch reads MSASTHSHKRKNS. The disordered stretch occupies residues 1–58; it reads MSASTHSHKRKNSHLFPQRKSSNSSMDKPFFPNNDSVANTDPQSNENGHTINEIRPTE. Residues 1–119 lie on the Cytoplasmic side of the membrane; sequence MSASTHSHKR…GEWSLPEKRS (119 aa). The segment covering 33–50 has biased composition (polar residues); that stretch reads NNDSVANTDPQSNENGHT. A helical; Signal-anchor for type II membrane protein membrane pass occupies residues 120–140; it reads YVLVFTLIALSVLVLLVILIP. The Lumenal segment spans residues 141 to 931; sequence SKLLPTKITR…RFDNTEVLHL (791 aa). An N-linked (GlcNAc...) asparagine glycan is attached at Asn377. The Charge relay system role is filled by Ser785. Asn814 is a glycosylation site (N-linked (GlcNAc...) asparagine). Catalysis depends on charge relay system residues Asp863 and His896.

Belongs to the peptidase S9B family.

The protein localises to the vacuole membrane. In terms of biological role, responsible for the proteolytic maturation of the alpha-factor precursor. This is Dipeptidyl aminopeptidase A (STE13) from Saccharomyces cerevisiae (strain ATCC 204508 / S288c) (Baker's yeast).